A 385-amino-acid chain; its full sequence is UPF0284 protein PMT9312_0438 (385 aa).

Belongs to the UPF0284 family.

The protein is UPF0284 protein PMT9312_0438 of Prochlorococcus marinus (strain MIT 9312).